The chain runs to 412 residues: Multifunctional CCA protein (412 aa).

The ATP site is built by Gly-8 and Arg-11. The CTP site is built by Gly-8 and Arg-11. Asp-21 and Asp-23 together coordinate Mg(2+). ATP is bound by residues Arg-91, Arg-137, and Arg-140. 3 residues coordinate CTP: Arg-91, Arg-137, and Arg-140. One can recognise an HD domain in the interval 228–329 (TGIHTLMTLS…VKLFDSIDAW (102 aa)).

This sequence belongs to the tRNA nucleotidyltransferase/poly(A) polymerase family. Bacterial CCA-adding enzyme type 1 subfamily. As to quaternary structure, monomer. Can also form homodimers and oligomers. Mg(2+) is required as a cofactor. It depends on Ni(2+) as a cofactor.

The catalysed reaction is a tRNA precursor + 2 CTP + ATP = a tRNA with a 3' CCA end + 3 diphosphate. The enzyme catalyses a tRNA with a 3' CCA end + 2 CTP + ATP = a tRNA with a 3' CCACCA end + 3 diphosphate. Catalyzes the addition and repair of the essential 3'-terminal CCA sequence in tRNAs without using a nucleic acid template. Adds these three nucleotides in the order of C, C, and A to the tRNA nucleotide-73, using CTP and ATP as substrates and producing inorganic pyrophosphate. tRNA 3'-terminal CCA addition is required both for tRNA processing and repair. Also involved in tRNA surveillance by mediating tandem CCA addition to generate a CCACCA at the 3' terminus of unstable tRNAs. While stable tRNAs receive only 3'-terminal CCA, unstable tRNAs are marked with CCACCA and rapidly degraded. This chain is Multifunctional CCA protein, found in Escherichia coli O6:K15:H31 (strain 536 / UPEC).